We begin with the raw amino-acid sequence, 431 residues long: MSVIQDLQSRDLIAQTTDIEALDALLNEQKIALYCGFDPTADSLHIGHLLPVLALRRFQQAGHTPIALVGGATGMIGDPSFKAAERSLNSAETVAGWVESIRNQLTPFLSFEGGNAAIMANNADWFGKMNCLDFLRDIGKHFSVNAMLNKESVKQRIDRDGAGISFTEFAYSLLQGYDFAELNKRYGAVLEIGGSDQWGNITAGIDLTRRLNQKQVFGLTLPLVTKSDGTKFGKTEGGAVWLNAKKTSPYQFYQFWLKVADADVYKFLKYFTFLSIEEIDAVEAKDQASGSKPEAQRILAEEMTRLIHGEEALAAAQRISESLFAEDQSSLTESDFEQLALDGLPAFEVSDGINVVEALVKTGLASSNKEARGFVNSKAVLLNGKPAEANNPNHAAERPDDACLLTDEHKRFGKYTILRRGKRNHALLVWK.

Y34 lines the L-tyrosine pocket. The short motif at 39–48 (PTADSLHIGH) is the 'HIGH' region element. L-tyrosine contacts are provided by Y171 and Q175. A 'KMSKS' region motif is present at residues 231 to 235 (KFGKT). K234 serves as a coordination point for ATP. The 70-residue stretch at 353 to 422 (INVVEALVKT…GKYTILRRGK (70 aa)) folds into the S4 RNA-binding domain.

It belongs to the class-I aminoacyl-tRNA synthetase family. TyrS type 1 subfamily. In terms of assembly, homodimer.

It localises to the cytoplasm. It carries out the reaction tRNA(Tyr) + L-tyrosine + ATP = L-tyrosyl-tRNA(Tyr) + AMP + diphosphate + H(+). Catalyzes the attachment of tyrosine to tRNA(Tyr) in a two-step reaction: tyrosine is first activated by ATP to form Tyr-AMP and then transferred to the acceptor end of tRNA(Tyr). This Neisseria meningitidis serogroup C (strain 053442) protein is Tyrosine--tRNA ligase.